The sequence spans 395 residues: Bifunctional fatty acid conjugase/Delta(12)-oleate desaturase (395 aa).

2 helical membrane-spanning segments follow: residues 73 to 93 (FALA…LPKP) and 97 to 117 (MAWP…WVIA). A Histidine box-1 motif is present at residues 118-122 (HECGH). Residues 130–150 (WVNDAVGFFLHTSLLVPYFPF) form a helical membrane-spanning segment. The Histidine box-2 motif lies at 154 to 158 (HRRHH). The next 3 membrane-spanning stretches (helical) occupy residues 192–212 (VLTL…FNAS), 236–256 (FWVH…YRLA), and 264–284 (LLSI…LITF). Residues 328–332 (HVIHH) carry the Histidine box-3 motif.

This sequence belongs to the fatty acid desaturase type 1 family.

It localises to the membrane. It catalyses the reaction a (9Z,12Z)-octadecadienoyl-containing glycerolipid + 2 Fe(II)-[cytochrome b5] + O2 + 2 H(+) = a (9Z,11E,13Z)-octadeca-9,11,13-trienoyl-containing glycerolipid + 2 Fe(III)-[cytochrome b5] + 2 H2O. It functions in the pathway lipid metabolism; polyunsaturated fatty acid biosynthesis. Functionally, converts a single cis double bond at position 12 of linoleate incorporated into phosphatidylcholine into conjugated 11-trans and 13-cis double bonds. Produces punicic acid (18:3(9Z,11E,13Z)) from linoleic acid and conjugated octadecatetraenoic fatty acid from gamma-linolenic acid. No activity with cis- and trans-vaccenic acid, alpha-linolenic acid or homo-gamma-linolenic acid. 16:2(9Z,12Z), 18:3(9Z,12Z,15Z) and 18:2(9Z,12Z) are substrates for the conjugase to form trans-Delta(11) and cis-Delta(13) double bonds. No activity on the cis-Delta(9) double bonds of oleic and palmitoleic acids. In Punica granatum (Pomegranate), this protein is Bifunctional fatty acid conjugase/Delta(12)-oleate desaturase.